Reading from the N-terminus, the 212-residue chain is Large ribosomal subunit protein uL3 (212 aa).

At Q153 the chain carries N5-methylglutamine.

The protein belongs to the universal ribosomal protein uL3 family. Part of the 50S ribosomal subunit. Forms a cluster with proteins L14 and L19. Methylated by PrmB.

Functionally, one of the primary rRNA binding proteins, it binds directly near the 3'-end of the 23S rRNA, where it nucleates assembly of the 50S subunit. This Shewanella woodyi (strain ATCC 51908 / MS32) protein is Large ribosomal subunit protein uL3.